A 154-amino-acid chain; its full sequence is Large ribosomal subunit protein uL24 (154 aa).

The interval 97 to 154 (EIAARKNLPPPEVPEETSNDTKESDENVTGADKEETNEIKEEDLNDNEDKNNDGSQEA) is disordered. A compositionally biased stretch (basic and acidic residues) spans 115-135 (NDTKESDENVTGADKEETNEI).

It belongs to the universal ribosomal protein uL24 family. As to quaternary structure, part of the 50S ribosomal subunit.

Its function is as follows. One of two assembly initiator proteins, it binds directly to the 5'-end of the 23S rRNA, where it nucleates assembly of the 50S subunit. In terms of biological role, located at the polypeptide exit tunnel on the outside of the subunit. This Picrophilus torridus (strain ATCC 700027 / DSM 9790 / JCM 10055 / NBRC 100828 / KAW 2/3) protein is Large ribosomal subunit protein uL24.